The chain runs to 133 residues: Ribosomal RNA large subunit methyltransferase H 1 (133 aa).

S-adenosyl-L-methionine-binding positions include I55, G89, and 101 to 106 (ISPMEM).

Belongs to the RNA methyltransferase RlmH family. As to quaternary structure, homodimer.

Its subcellular location is the cytoplasm. The catalysed reaction is pseudouridine(1915) in 23S rRNA + S-adenosyl-L-methionine = N(3)-methylpseudouridine(1915) in 23S rRNA + S-adenosyl-L-homocysteine + H(+). Its function is as follows. Specifically methylates the pseudouridine at position 1915 (m3Psi1915) in 23S rRNA. The protein is Ribosomal RNA large subunit methyltransferase H 1 of Thermoanaerobacter sp. (strain X514).